A 194-amino-acid polypeptide reads, in one-letter code: MAGREGHFRLIAGLGNPGSKYAGTRHNAGFWLVDELVRRYGGELREEPKFRGDCARVLIDGYDCRLVKPMTYMNHSGQAVGALANFFKIPPEAILVAHDEIDLPPGSVRLKRGGGHGGHNGLRHIQSTLGTPDFARLRLGVGHPGHKDQVVPHVLSRPSPDELRQLERAIDDAADQIPRLLAGEWDRACQQLHA.

Tyr21 provides a ligand contact to tRNA. Residue His26 is the Proton acceptor of the active site. TRNA is bound by residues Tyr72, Asn74, and Asn120.

It belongs to the PTH family. In terms of assembly, monomer.

Its subcellular location is the cytoplasm. It carries out the reaction an N-acyl-L-alpha-aminoacyl-tRNA + H2O = an N-acyl-L-amino acid + a tRNA + H(+). Hydrolyzes ribosome-free peptidyl-tRNAs (with 1 or more amino acids incorporated), which drop off the ribosome during protein synthesis, or as a result of ribosome stalling. In terms of biological role, catalyzes the release of premature peptidyl moieties from peptidyl-tRNA molecules trapped in stalled 50S ribosomal subunits, and thus maintains levels of free tRNAs and 50S ribosomes. This is Peptidyl-tRNA hydrolase from Halorhodospira halophila (strain DSM 244 / SL1) (Ectothiorhodospira halophila (strain DSM 244 / SL1)).